The primary structure comprises 446 residues: 3-phosphoshikimate 1-carboxyvinyltransferase (446 aa).

Positions 1-20 are disordered; sequence MIMAKPLSSRRAAPLAGSAP. 3-phosphoshikimate-binding residues include K25, S26, and R30. K25 is a binding site for phosphoenolpyruvate. Phosphoenolpyruvate contacts are provided by G98 and R126. Residues S171, Q173, D324, and K351 each contribute to the 3-phosphoshikimate site. Q173 contributes to the phosphoenolpyruvate binding site. D324 acts as the Proton acceptor in catalysis. Residues R355 and R399 each coordinate phosphoenolpyruvate.

Belongs to the EPSP synthase family. In terms of assembly, monomer.

It is found in the cytoplasm. The catalysed reaction is 3-phosphoshikimate + phosphoenolpyruvate = 5-O-(1-carboxyvinyl)-3-phosphoshikimate + phosphate. Its pathway is metabolic intermediate biosynthesis; chorismate biosynthesis; chorismate from D-erythrose 4-phosphate and phosphoenolpyruvate: step 6/7. In terms of biological role, catalyzes the transfer of the enolpyruvyl moiety of phosphoenolpyruvate (PEP) to the 5-hydroxyl of shikimate-3-phosphate (S3P) to produce enolpyruvyl shikimate-3-phosphate and inorganic phosphate. The polypeptide is 3-phosphoshikimate 1-carboxyvinyltransferase (Paramagnetospirillum magneticum (strain ATCC 700264 / AMB-1) (Magnetospirillum magneticum)).